A 259-amino-acid polypeptide reads, in one-letter code: 4-hydroxy-tetrahydrodipicolinate reductase (259 aa).

Residues 8–13 (GFKGRM), 93–95 (GTT), and 119–122 (APNF) contribute to the NAD(+) site. H149 acts as the Proton donor/acceptor in catalysis. H150 lines the (S)-2,3,4,5-tetrahydrodipicolinate pocket. Catalysis depends on K153, which acts as the Proton donor. Residue 159–160 (GT) participates in (S)-2,3,4,5-tetrahydrodipicolinate binding.

This sequence belongs to the DapB family.

The protein resides in the cytoplasm. It catalyses the reaction (S)-2,3,4,5-tetrahydrodipicolinate + NAD(+) + H2O = (2S,4S)-4-hydroxy-2,3,4,5-tetrahydrodipicolinate + NADH + H(+). It carries out the reaction (S)-2,3,4,5-tetrahydrodipicolinate + NADP(+) + H2O = (2S,4S)-4-hydroxy-2,3,4,5-tetrahydrodipicolinate + NADPH + H(+). Its pathway is amino-acid biosynthesis; L-lysine biosynthesis via DAP pathway; (S)-tetrahydrodipicolinate from L-aspartate: step 4/4. Functionally, catalyzes the conversion of 4-hydroxy-tetrahydrodipicolinate (HTPA) to tetrahydrodipicolinate. The polypeptide is 4-hydroxy-tetrahydrodipicolinate reductase (Enterococcus faecalis (strain ATCC 700802 / V583)).